The sequence spans 162 residues: Putative pre-16S rRNA nuclease (162 aa).

It belongs to the YqgF nuclease family.

The protein resides in the cytoplasm. In terms of biological role, could be a nuclease involved in processing of the 5'-end of pre-16S rRNA. This chain is Putative pre-16S rRNA nuclease, found in Brucella abortus (strain S19).